Consider the following 218-residue polypeptide: Small ribosomal subunit protein uS5 (218 aa).

The disordered stretch occupies residues 1–45 (MPGRQRRDGGNGPAGQNSNGPEGRDNRRGGGDRRGGGDRRDNAAE). The segment covering 22–45 (EGRDNRRGGGDRRGGGDRRDNAAE) has biased composition (basic and acidic residues). Residues 48–111 (QLERVVAINR…EEARKGFFRV (64 aa)) enclose the S5 DRBM domain.

Belongs to the universal ribosomal protein uS5 family. As to quaternary structure, part of the 30S ribosomal subunit. Contacts proteins S4 and S8.

Functionally, with S4 and S12 plays an important role in translational accuracy. Located at the back of the 30S subunit body where it stabilizes the conformation of the head with respect to the body. This Nocardia farcinica (strain IFM 10152) protein is Small ribosomal subunit protein uS5.